Here is a 160-residue protein sequence, read N- to C-terminus: 2-C-methyl-D-erythritol 2,4-cyclodiphosphate synthase (160 aa).

The a divalent metal cation site is built by Asp-10 and His-12. Residues Asp-10–His-12 and His-36–Ser-37 each bind 4-CDP-2-C-methyl-D-erythritol 2-phosphate. His-44 contributes to the a divalent metal cation binding site. 4-CDP-2-C-methyl-D-erythritol 2-phosphate is bound by residues Asp-58–Gly-60, Thr-134–Glu-137, Phe-141, and Arg-144.

This sequence belongs to the IspF family. As to quaternary structure, homotrimer. A divalent metal cation is required as a cofactor.

It catalyses the reaction 4-CDP-2-C-methyl-D-erythritol 2-phosphate = 2-C-methyl-D-erythritol 2,4-cyclic diphosphate + CMP. It participates in isoprenoid biosynthesis; isopentenyl diphosphate biosynthesis via DXP pathway; isopentenyl diphosphate from 1-deoxy-D-xylulose 5-phosphate: step 4/6. In terms of biological role, involved in the biosynthesis of isopentenyl diphosphate (IPP) and dimethylallyl diphosphate (DMAPP), two major building blocks of isoprenoid compounds. Catalyzes the conversion of 4-diphosphocytidyl-2-C-methyl-D-erythritol 2-phosphate (CDP-ME2P) to 2-C-methyl-D-erythritol 2,4-cyclodiphosphate (ME-CPP) with a corresponding release of cytidine 5-monophosphate (CMP). In Phocaeicola vulgatus (strain ATCC 8482 / DSM 1447 / JCM 5826 / CCUG 4940 / NBRC 14291 / NCTC 11154) (Bacteroides vulgatus), this protein is 2-C-methyl-D-erythritol 2,4-cyclodiphosphate synthase.